The following is a 309-amino-acid chain: MTELTIHADRAQLGIPLFPAHPVDGLAGTSFKHQHLPAILADDEWTGGFFEVHAENYMGAGGPPHAALTKIREDYPVSLHGVCMSIGGPQSLDKGHLARFAALVKRYEPALVSEHLAWSTHDTTYYNDLLPLPYTEASLQRVAEHINEVQEVIGRPLLLENPSSYLLFKESTMSETAFIRGLVRRTGCGLLLDINNVFVSATNHGFSALDYLSDFPMAHVGEIHLAGHTEQQDDEGDLLLIDSHDKPVADAVWKLFDVVIALCGPIPTLVEWDSAIPDWPILKREAQAAQMLMDRHAAGLRQETLHVRG.

Belongs to the UPF0276 family.

In Rhizobium meliloti (strain 1021) (Ensifer meliloti), this protein is UPF0276 protein RB0508.